A 218-amino-acid polypeptide reads, in one-letter code: Small ribosomal subunit protein uS3c (218 aa).

The region spanning 47-118 is the KH type-2 domain; sequence VQKNLKISSG…KLNITITRIA (72 aa).

The protein belongs to the universal ribosomal protein uS3 family. Part of the 30S ribosomal subunit.

Its subcellular location is the plastid. The protein resides in the chloroplast. The chain is Small ribosomal subunit protein uS3c (rps3) from Daucus carota (Wild carrot).